A 212-amino-acid polypeptide reads, in one-letter code: Inactive ribonuclease-like protein 10 (212 aa).

The first 24 residues, 1–24, serve as a signal peptide directing secretion; the sequence is MKLTLVQIFFMMLLLLLGLGVGLG.

Belongs to the pancreatic ribonuclease family. In terms of processing, the N-terminus is blocked. Glycosylated. As to expression, male-specific expression in proximal caput of the epididymis.

It localises to the secreted. Functionally, secreted proximal epididymal protein required for post-testicular sperm maturation and male fertility. May be involved in sperm adhesion to the egg zona pellucida. Does not have ribonuclease activity. The protein is Inactive ribonuclease-like protein 10 (RNASE10) of Ovis aries (Sheep).